The following is a 198-amino-acid chain: Large ribosomal subunit protein uL5 (198 aa).

The protein belongs to the universal ribosomal protein uL5 family. As to quaternary structure, part of the 50S ribosomal subunit; part of the 5S rRNA/L5/L18/L25 subcomplex. Contacts the 5S rRNA and the P site tRNA. Forms a bridge to the 30S subunit in the 70S ribosome.

Functionally, this is one of the proteins that bind and probably mediate the attachment of the 5S RNA into the large ribosomal subunit, where it forms part of the central protuberance. In the 70S ribosome it contacts protein S13 of the 30S subunit (bridge B1b), connecting the 2 subunits; this bridge is implicated in subunit movement. Contacts the P site tRNA; the 5S rRNA and some of its associated proteins might help stabilize positioning of ribosome-bound tRNAs. This is Large ribosomal subunit protein uL5 from Chlorobium phaeovibrioides (strain DSM 265 / 1930) (Prosthecochloris vibrioformis (strain DSM 265)).